The sequence spans 183 residues: Translocon-associated protein subunit beta (183 aa).

Positions 1 to 17 (MRLLASVLLALFAVSHA) are cleaved as a signal peptide. Topologically, residues 18–149 (EEGARLLASK…DRRFSPHFLD (132 aa)) are lumenal. 2 N-linked (GlcNAc...) asparagine glycosylation sites follow: N88 and N104. A helical membrane pass occupies residues 150 to 169 (WAAFGVMTLPSIGIPLLLWY). The Cytoplasmic segment spans residues 170–183 (SSKRKYDTPKSKKN).

This sequence belongs to the TRAP-beta family. In terms of assembly, heterotetramer of TRAP-alpha, TRAP-beta, TRAP-delta and TRAP-gamma. Interacts with STING1.

It localises to the endoplasmic reticulum membrane. In terms of biological role, TRAP proteins are part of a complex whose function is to bind calcium to the ER membrane and thereby regulate the retention of ER resident proteins. The sequence is that of Translocon-associated protein subunit beta (SSR2) from Canis lupus familiaris (Dog).